The primary structure comprises 314 residues: Acetaldehyde dehydrogenase 2 (314 aa).

15-18 (SGNI) serves as a coordination point for NAD(+). Cys133 serves as the catalytic Acyl-thioester intermediate. NAD(+) is bound by residues 164 to 172 (SAGPGTRQN) and Asn289.

Belongs to the acetaldehyde dehydrogenase family.

It carries out the reaction acetaldehyde + NAD(+) + CoA = acetyl-CoA + NADH + H(+). The chain is Acetaldehyde dehydrogenase 2 from Nocardioides sp. (strain ATCC BAA-499 / JS614).